A 133-amino-acid chain; its full sequence is Ribonuclease P protein component (133 aa).

This sequence belongs to the RnpA family. Consists of a catalytic RNA component (M1 or rnpB) and a protein subunit.

It catalyses the reaction Endonucleolytic cleavage of RNA, removing 5'-extranucleotides from tRNA precursor.. Its function is as follows. RNaseP catalyzes the removal of the 5'-leader sequence from pre-tRNA to produce the mature 5'-terminus. It can also cleave other RNA substrates such as 4.5S RNA. The protein component plays an auxiliary but essential role in vivo by binding to the 5'-leader sequence and broadening the substrate specificity of the ribozyme. The polypeptide is Ribonuclease P protein component (Corynebacterium efficiens (strain DSM 44549 / YS-314 / AJ 12310 / JCM 11189 / NBRC 100395)).